Here is a 63-residue protein sequence, read N- to C-terminus: Large ribosomal subunit protein bL28 (63 aa).

The protein belongs to the bacterial ribosomal protein bL28 family.

The protein is Large ribosomal subunit protein bL28 of Dictyoglomus thermophilum (strain ATCC 35947 / DSM 3960 / H-6-12).